A 200-amino-acid polypeptide reads, in one-letter code: MTSNTPLPPCSILLLAGGRGQRMGGQDKGLVEWHGEPLIVHLHRKVRPLTDDLIISCNRNRERYAPFADRLVSDDEEDFPGPLAGIRAGLKAARHTHLLVLPCDVPRIDLALLHNMREAAGLNSEKPLMLRHDDHWEPLLCVIPVALLPAFENAWNAGERSPGRVMRNLDAQALVCPDNDPRLANLNTPELLSSHNTVSD.

Residues 15-17 (LAG), Lys28, Asp74, and Asp104 contribute to the GTP site. Asp104 provides a ligand contact to Mg(2+).

Belongs to the MobA family. As to quaternary structure, monomer. Requires Mg(2+) as cofactor.

It localises to the cytoplasm. It catalyses the reaction Mo-molybdopterin + GTP + H(+) = Mo-molybdopterin guanine dinucleotide + diphosphate. In terms of biological role, transfers a GMP moiety from GTP to Mo-molybdopterin (Mo-MPT) cofactor (Moco or molybdenum cofactor) to form Mo-molybdopterin guanine dinucleotide (Mo-MGD) cofactor. The protein is Molybdenum cofactor guanylyltransferase of Pseudomonas fluorescens (strain Pf0-1).